The following is a 482-amino-acid chain: Lipoamide acyltransferase component of branched-chain alpha-keto acid dehydrogenase complex, mitochondrial (482 aa).

A mitochondrion-targeting transit peptide spans 1 to 61 (MAAVRMLRTW…HFLKTTAALR (61 aa)). Positions 64 to 139 (VVQFKLSDIG…YVGKPLVDIE (76 aa)) constitute a Lipoyl-binding domain. N6-lipoyllysine is present on K105. K133 carries the N6-succinyllysine modification. The interval 145–160 (DSEEDVVETPAVSHDE) is critical for association with PPM1K. A disordered region spans residues 147-168 (EEDVVETPAVSHDEHTHQEIKG). The segment covering 157 to 168 (SHDEHTHQEIKG) has biased composition (basic and acidic residues). The Peripheral subunit-binding (PSBD) domain maps to 172–209 (LATPAVRRLAMENNIKLSEVVGSGKDGRILKEDILNYL). K196 is modified (N6-acetyllysine; alternate). N6-succinyllysine; alternate is present on K196. K202 is modified (N6-acetyllysine). A Phosphoserine modification is found at S220. 2 positions are modified to N6-acetyllysine: K243 and K250. K261 carries the N6-succinyllysine modification. At K289 the chain carries N6-acetyllysine; alternate. K289 carries the post-translational modification N6-succinyllysine; alternate. Residue R291 participates in CoA binding. Residues K295 and K304 each carry the N6-acetyllysine modification. CoA contacts are provided by S306, D349, Q378, S399, N400, S403, G424, and I426. An N6-acetyllysine modification is found at K435. The residue at position 440 (K440) is an N6-acetyllysine; alternate. K440 carries the N6-succinyllysine; alternate modification. Residues H452 and D456 contribute to the active site.

It belongs to the 2-oxoacid dehydrogenase family. In terms of assembly, forms a 24-polypeptide structural core with octahedral symmetry that represents the E2 component of the branched-chain alpha-ketoacid dehydrogenase (BCKDH) complex. The BCKDH complex is composed of three major building blocks E1, E2 and E3. It is organized around E2, a 24-meric cubic core composed of DBT, to which are associated 6 to 12 copies of E1, and approximately 6 copies of the dehydrogenase E3, a DLD dimer. Interacts with PPM1K with a 24:1 stoichiometry; the N-terminal region (residues 49-61) of PPM1K and C-terminal linker of the lipoyl domain of DBT/E2 (residues 145-160) are critical for this interaction whereas the lipoyl prosthetic group is dispensable. This interaction requires colocalization in mitochondria. PPM1K competes with BCKDK for binding to DBT; this interaction is modulated by branched-chain alpha-keto acids (BCKAs). At steady state, BCKDH holoenzyme preferentially binds BCKDK and BCKDHA is phosphorylated. In response to high levels of BCKAs, BCKDK is replaced by PPM1K leading to BCKDHA dephosphorylation. (R)-lipoate is required as a cofactor.

It localises to the mitochondrion matrix. It catalyses the reaction N(6)-[(R)-dihydrolipoyl]-L-lysyl-[protein] + 2-methylpropanoyl-CoA = N(6)-[(R)-S(8)-2-methylpropanoyldihydrolipoyl]-L-lysyl-[protein] + CoA. Its function is as follows. The branched-chain alpha-keto dehydrogenase complex catalyzes the overall conversion of alpha-keto acids to acyl-CoA and CO(2). It contains multiple copies of three enzymatic components: branched-chain alpha-keto acid decarboxylase (E1), lipoamide acyltransferase (E2) and lipoamide dehydrogenase (E3). Within this complex, the catalytic function of this enzyme is to accept, and to transfer to coenzyme A, acyl groups that are generated by the branched-chain alpha-keto acid decarboxylase component. This is Lipoamide acyltransferase component of branched-chain alpha-keto acid dehydrogenase complex, mitochondrial from Homo sapiens (Human).